The sequence spans 565 residues: Sulfite reductase [NADPH] hemoprotein beta-component (565 aa).

[4Fe-4S] cluster is bound by residues Cys-429, Cys-435, Cys-474, and Cys-478. Cys-478 is a siroheme binding site.

It belongs to the nitrite and sulfite reductase 4Fe-4S domain family. In terms of assembly, alpha(8)-beta(8). The alpha component is a flavoprotein, the beta component is a hemoprotein. Siroheme is required as a cofactor. It depends on [4Fe-4S] cluster as a cofactor.

The enzyme catalyses hydrogen sulfide + 3 NADP(+) + 3 H2O = sulfite + 3 NADPH + 4 H(+). It functions in the pathway sulfur metabolism; hydrogen sulfide biosynthesis; hydrogen sulfide from sulfite (NADPH route): step 1/1. Component of the sulfite reductase complex that catalyzes the 6-electron reduction of sulfite to sulfide. This is one of several activities required for the biosynthesis of L-cysteine from sulfate. This Shewanella sp. (strain MR-4) protein is Sulfite reductase [NADPH] hemoprotein beta-component.